Reading from the N-terminus, the 437-residue chain is GTPase Era, mitochondrial (437 aa).

The N-terminal 20 residues, 1-20 (MAAPRRYCAGLVRALLGARQ), are a transit peptide targeting the mitochondrion. Residues 112–330 (RVLRVVLLGA…QYLLTQAQPG (219 aa)) enclose the Era-type G domain. The G1 stretch occupies residues 120 to 127 (GAPNAGKS). 120–127 (GAPNAGKS) is a GTP binding site. The segment at 146–150 (HTTRC) is G2. Positions 167–170 (DTPG) are G3. A GTP-binding site is contributed by 167–171 (DTPGI). The residue at position 173 (Ser173) is a Phosphoserine. 236 to 239 (NKVD) lines the GTP pocket. Residues 236-239 (NKVD) are G4. Residues 270-292 (LRSRSSTHCPGPETEGPNAHSVR) form a disordered region. The tract at residues 308–310 (LSA) is G5. The KH type-2 domain occupies 360–437 (LPEEVPYGVQ…LIRLSVKLLK (78 aa)).

This sequence belongs to the TRAFAC class TrmE-Era-EngA-EngB-Septin-like GTPase superfamily. Era GTPase family.

It is found in the mitochondrion matrix. It localises to the mitochondrion inner membrane. Probable GTPase that plays a role in the mitochondrial ribosomal small subunit assembly. Specifically binds the 12S mitochondrial rRNA (12S mt-rRNA) to a 33 nucleotide section delineating the 3' terminal stem-loop region. May act as a chaperone that protects the 12S mt-rRNA on the 28S mitoribosomal subunit during ribosomal small subunit assembly. This Mus musculus (Mouse) protein is GTPase Era, mitochondrial (Eral1).